Consider the following 125-residue polypeptide: uncharacterized protein (125 aa).

This sequence belongs to the asfivirus B125R family.

This is an uncharacterized protein from African swine fever virus (isolate Tick/Malawi/Lil 20-1/1983) (ASFV).